A 113-amino-acid chain; its full sequence is Large ribosomal subunit protein bL17 (113 aa).

It belongs to the bacterial ribosomal protein bL17 family. Part of the 50S ribosomal subunit. Contacts protein L32.

This chain is Large ribosomal subunit protein bL17, found in Caldicellulosiruptor saccharolyticus (strain ATCC 43494 / DSM 8903 / Tp8T 6331).